The sequence spans 358 residues: Aromatic amino acid aminotransferase (358 aa).

Lys219 is modified (N6-(pyridoxal phosphate)lysine).

Belongs to the class-II pyridoxal-phosphate-dependent aminotransferase family. As to quaternary structure, homodimer. Requires pyridoxal 5'-phosphate as cofactor.

It catalyses the reaction an aromatic L-alpha-amino acid + 2-oxoglutarate = an aromatic oxo-acid + L-glutamate. Functionally, aminotransferase that catalyzes the conversion of aromatic amino acids and 2-oxoglutarate into corresponding aromatic oxo acids and L-glutamate. This chain is Aromatic amino acid aminotransferase, found in Nocardia farcinica (strain IFM 10152).